The chain runs to 549 residues: Chaperonin GroEL (549 aa).

ATP contacts are provided by residues 30–33 (TLGP), Lys-51, 87–91 (DGTTT), Gly-415, 479–481 (NAA), and Asp-495.

The protein belongs to the chaperonin (HSP60) family. In terms of assembly, forms a cylinder of 14 subunits composed of two heptameric rings stacked back-to-back. Interacts with the co-chaperonin GroES.

The protein resides in the cytoplasm. It carries out the reaction ATP + H2O + a folded polypeptide = ADP + phosphate + an unfolded polypeptide.. Functionally, together with its co-chaperonin GroES, plays an essential role in assisting protein folding. The GroEL-GroES system forms a nano-cage that allows encapsulation of the non-native substrate proteins and provides a physical environment optimized to promote and accelerate protein folding. The polypeptide is Chaperonin GroEL (Stenotrophomonas maltophilia (strain R551-3)).